Here is a 276-residue protein sequence, read N- to C-terminus: uncharacterized protein (276 aa).

In terms of domain architecture, AB hydrolase-1 spans 20-137; the sequence is PVLIFIPGAN…PPINTFLPDS (118 aa). The interval 57–76 is disordered; the sequence is GESELTEPLPDSASNPDSDY.

The protein belongs to the AB hydrolase superfamily.

This is an uncharacterized protein from Staphylococcus aureus (strain USA300).